The primary structure comprises 303 residues: Protein translocase subunit SecF (303 aa).

The next 6 membrane-spanning stretches (helical) occupy residues 28 to 48 (SIILSLISFIWIGMYKFNFGI), 140 to 160 (IEAGTMAMLFSFAAIMIYIWV), 164 to 184 (WYFGLGILIALVHDVILALGF), 194 to 214 (LSTIAAVLTIIGYSVNDSVVI), 246 to 266 (ILTVVTTLLANLALVLFGGEA), and 272 to 292 (VLVFFGIIAGTYSSIFISAPI).

Belongs to the SecD/SecF family. SecF subfamily. As to quaternary structure, forms a complex with SecD. Part of the essential Sec protein translocation apparatus which comprises SecA, SecYEG and auxiliary proteins SecDF-YajC and YidC.

It is found in the cell inner membrane. Part of the Sec protein translocase complex. Interacts with the SecYEG preprotein conducting channel. SecDF uses the proton motive force (PMF) to complete protein translocation after the ATP-dependent function of SecA. This Rickettsia bellii (strain OSU 85-389) protein is Protein translocase subunit SecF.